A 98-amino-acid chain; its full sequence is MSWAGSGRRQELPEDWELNYRLPVLSAANWLCQINGPGCVRAATDVDHIKRGNDHSRSNLQAACHVCHGKKSAAEGVARRRELRARRKRPPERHPGRR.

The region spanning 38–73 is the HNH domain; that stretch reads GCVRAATDVDHIKRGNDHSRSNLQAACHVCHGKKSA. The segment at 75 to 98 is disordered; it reads EGVARRRELRARRKRPPERHPGRR. A compositionally biased stretch (basic residues) spans 81–98; sequence RELRARRKRPPERHPGRR.

The polypeptide is Gene 4 protein (4) (Mycobacterium (Mycobacteriophage L5)).